The following is a 382-amino-acid chain: S-adenosylmethionine decarboxylase proenzyme (382 aa).

F32 serves as a coordination point for substrate. Active-site residues include E33 and E36. Substrate is bound at residue L87. The active-site Schiff-base intermediate with substrate; via pyruvic acid is the S90. S90 is subject to Pyruvic acid (Ser); by autocatalysis. Catalysis depends on C104, which acts as the Proton donor; for catalytic activity. F248 is a binding site for substrate. Residues S254 and H267 each act as proton acceptor; for processing activity in the active site. Residue E271 coordinates substrate.

The protein belongs to the eukaryotic AdoMetDC family. Heterotetramer of two alpha and two beta chains. The cofactor is pyruvate. Post-translationally, is synthesized initially as an inactive proenzyme. Formation of the active enzyme involves a self-maturation process in which the active site pyruvoyl group is generated from an internal serine residue via an autocatalytic post-translational modification. Two non-identical subunits are generated from the proenzyme in this reaction, and the pyruvate is formed at the N-terminus of the alpha chain, which is derived from the carboxyl end of the proenzyme. The post-translation cleavage follows an unusual pathway, termed non-hydrolytic serinolysis, in which the side chain hydroxyl group of the serine supplies its oxygen atom to form the C-terminus of the beta chain, while the remainder of the serine residue undergoes an oxidative deamination to produce ammonia and the pyruvoyl group blocking the N-terminus of the alpha chain.

It catalyses the reaction S-adenosyl-L-methionine + H(+) = S-adenosyl 3-(methylsulfanyl)propylamine + CO2. It functions in the pathway amine and polyamine biosynthesis; S-adenosylmethioninamine biosynthesis; S-adenosylmethioninamine from S-adenosyl-L-methionine: step 1/1. The protein is S-adenosylmethionine decarboxylase proenzyme of Leishmania donovani.